Reading from the N-terminus, the 626-residue chain is Bifurcating [FeFe] hydrogenase beta subunit (626 aa).

Residue 198–201 participates in NAD(+) binding; sequence GGGG. FMN-binding positions include K207 and 224–228; that span reads NGDEG. D229 is a binding site for NAD(+). FMN is bound by residues 312–317 and 350–352; these read FVCGEE and INN. [4Fe-4S] cluster contacts are provided by C485, C488, C491, C531, C578, C581, C584, C588, C608, C611, C614, and C618. 2 consecutive 4Fe-4S ferredoxin-type domains span residues 569-598 and 599-626; these read KKYV…GERG and KPYT…IELV.

The protein belongs to the complex I 51 kDa subunit family. In terms of assembly, heterotrimer composed of HydA (alpha subunit), HydB (beta subunit) and HydC (gamma subunit). Near neutral and acidic pH conditions favor oligomerization of the heterotrimeric holoenzyme. [2Fe-2S] cluster is required as a cofactor. Requires [4Fe-4S] cluster as cofactor. The cofactor is FMN.

Its subcellular location is the cytoplasm. The catalysed reaction is 2 H2 + 2 oxidized [2Fe-2S]-[ferredoxin] + NAD(+) = 2 reduced [2Fe-2S]-[ferredoxin] + NADH + 3 H(+). Catalyzes the oxidation of the physiological electron carriers NADH and reduced ferredoxin, coupled to the production of H(2). Acts as a bifurcating [FeFe] hydrogenase, which uses the exergonic oxidation of reduced ferredoxin to drive the unfavorable oxidation of NADH to produce H(2). The beta subunit contains flavin- and NAD-binding sites and is potentially the site for NADH oxidation, with the subsequent shuttling of electrons to the alpha subunit. This Thermotoga maritima (strain ATCC 43589 / DSM 3109 / JCM 10099 / NBRC 100826 / MSB8) protein is Bifurcating [FeFe] hydrogenase beta subunit.